The chain runs to 1132 residues: Myosin-binding protein C, fast-type (1132 aa).

The tract at residues 1 to 59 (MPEPSKAAPKKEAKKKEEKKEEKKEAPPPQEHKDEAPDDVHPPETPDPEGLFLSKPQNV) is disordered. The segment covering 9-44 (PKKEAKKKEEKKEEKKEAPPPQEHKDEAPDDVHPPE) has biased composition (basic and acidic residues). 5 Ig-like C2-type domains span residues 48 to 149 (PEGL…SIDV), 249 to 338 (SEAF…VKEP), 339 to 429 (PVTV…VEEK), 430 to 530 (QLEV…KQEP), and 531 to 630 (PKIH…VVDV). Fibronectin type-III domains follow at residues 633 to 729 (PPQS…IAPT) and 731 to 826 (EPTH…IREI). The 94-residue stretch at 830–923 (PKIRLPRHLR…ATLRLRVVER (94 aa)) folds into the Ig-like C2-type 6 domain. Residues 926 to 1022 (PPQAVRVMEV…HNTARIAKEG (97 aa)) enclose the Fibronectin type-III 3 domain. Residues 1039-1132 (PQFLTPLVDR…ECRLDVRVPQ (94 aa)) form the Ig-like C2-type 7 domain.

Belongs to the immunoglobulin superfamily. MyBP family.

Thick filament-associated protein located in the crossbridge region of vertebrate striated muscle a bands. In vitro it binds MHC, F-actin and native thin filaments, and modifies the activity of actin-activated myosin ATPase. It may modulate muscle contraction or may play a more structural role. The polypeptide is Myosin-binding protein C, fast-type (MYBPC2) (Gallus gallus (Chicken)).